We begin with the raw amino-acid sequence, 504 residues long: Fumitremorgin C monooxygenase (504 aa).

A helical transmembrane segment spans residues 9 to 29; it reads LPYPGVVGASLLVILGIILLF. C442 contacts heme.

This sequence belongs to the cytochrome P450 family. Requires heme as cofactor.

The protein localises to the membrane. The catalysed reaction is fumitremorgin C + 2 reduced [NADPH--hemoprotein reductase] + 2 O2 = 12alpha,13alpha-dihydroxyfumitremorgin C + 2 oxidized [NADPH--hemoprotein reductase] + 2 H2O + 2 H(+). Its pathway is mycotoxin biosynthesis. In terms of biological role, cytochrome P450 monooxygenase; part of the gene cluster that mediates the biosynthesis of fumitremorgins, indole alkaloids that carry not only intriguing chemical structures, but also interesting biological and pharmacological activities. The biosynthesis of fumitremorgin-type alkaloids begins by condensation of the two amino acids L-tryptophan and L-proline to brevianamide F, catalyzed by the non-ribosomal peptide synthetase ftmPS/ftmA. Brevianamide F is then prenylated by the prenyltransferase ftmPT1/ftmB in the presence of dimethylallyl diphosphate, resulting in the formation of tryprostatin B. The three cytochrome P450 monooxygenases, ftmP450-1/ftmC, ftmP450-2/ftmE and ftmP450-3/FtmG, are responsible for the conversion of tryprostatin B to 6-hydroxytryprostatin B, tryprostatin A to fumitremorgin C and fumitremorgin C to 12,13-dihydroxyfumitremorgin C, respectively. The putative methyltransferase ftmMT/ftmD is expected for the conversion of 6-hydroxytryprostatin B to tryprostatin A. FtmPT2/FtmH catalyzes the prenylation of 12,13-dihydroxyfumitre-morgin C in the presence of dimethylallyl diphosphate, resulting in the formation of fumitremorgin B. Fumitremorgin B is further converted to verruculogen by ftmOx1/ftmF via the insertion of an endoperoxide bond between the two prenyl moieties. Finally, verruculogen is further converted to fumitremorgin A by the verruculogen prenyltransferase ftmPT3. This is Fumitremorgin C monooxygenase from Neosartorya fischeri (strain ATCC 1020 / DSM 3700 / CBS 544.65 / FGSC A1164 / JCM 1740 / NRRL 181 / WB 181) (Aspergillus fischerianus).